Consider the following 116-residue polypeptide: UPF0654 protein C869.09 (116 aa).

The segment at 32 to 116 is disordered; sequence LKEHGSESHY…LLEEVDDESK (85 aa). Polar residues predominate over residues 39 to 48; sequence SHYTTGTTRG. Over residues 49-64 the composition is skewed to basic and acidic residues; sequence QKADADDAGELREEGF.

It belongs to the UPF0654 (con-6) family.

The protein localises to the cytoplasm. It is found in the nucleus. This chain is UPF0654 protein C869.09, found in Schizosaccharomyces pombe (strain 972 / ATCC 24843) (Fission yeast).